The sequence spans 461 residues: Bifunctional protein GlmU (461 aa).

Residues 1–229 (MNKYVVILAA…FSESLGVNDR (229 aa)) are pyrophosphorylase. UDP-N-acetyl-alpha-D-glucosamine is bound by residues 8–11 (LAAG), K22, Q72, and 77–78 (GT). D102 is a binding site for Mg(2+). G139, E154, N169, and N227 together coordinate UDP-N-acetyl-alpha-D-glucosamine. N227 lines the Mg(2+) pocket. The tract at residues 230-250 (IALAQATKIMQRRINEEHMKN) is linker. The tract at residues 251-461 (GVSFIDPDTA…LPLSKDKEWE (211 aa)) is N-acetyltransferase. The UDP-N-acetyl-alpha-D-glucosamine site is built by R332 and K350. H362 serves as the catalytic Proton acceptor. UDP-N-acetyl-alpha-D-glucosamine is bound by residues Y365 and N376. Acetyl-CoA-binding positions include 385 to 386 (NY), A422, and R439.

It in the N-terminal section; belongs to the N-acetylglucosamine-1-phosphate uridyltransferase family. In the C-terminal section; belongs to the transferase hexapeptide repeat family. Homotrimer. The cofactor is Mg(2+).

The protein resides in the cytoplasm. It catalyses the reaction alpha-D-glucosamine 1-phosphate + acetyl-CoA = N-acetyl-alpha-D-glucosamine 1-phosphate + CoA + H(+). The catalysed reaction is N-acetyl-alpha-D-glucosamine 1-phosphate + UTP + H(+) = UDP-N-acetyl-alpha-D-glucosamine + diphosphate. The protein operates within nucleotide-sugar biosynthesis; UDP-N-acetyl-alpha-D-glucosamine biosynthesis; N-acetyl-alpha-D-glucosamine 1-phosphate from alpha-D-glucosamine 6-phosphate (route II): step 2/2. It participates in nucleotide-sugar biosynthesis; UDP-N-acetyl-alpha-D-glucosamine biosynthesis; UDP-N-acetyl-alpha-D-glucosamine from N-acetyl-alpha-D-glucosamine 1-phosphate: step 1/1. Its pathway is bacterial outer membrane biogenesis; LPS lipid A biosynthesis. In terms of biological role, catalyzes the last two sequential reactions in the de novo biosynthetic pathway for UDP-N-acetylglucosamine (UDP-GlcNAc). The C-terminal domain catalyzes the transfer of acetyl group from acetyl coenzyme A to glucosamine-1-phosphate (GlcN-1-P) to produce N-acetylglucosamine-1-phosphate (GlcNAc-1-P), which is converted into UDP-GlcNAc by the transfer of uridine 5-monophosphate (from uridine 5-triphosphate), a reaction catalyzed by the N-terminal domain. In Lactobacillus gasseri (strain ATCC 33323 / DSM 20243 / BCRC 14619 / CIP 102991 / JCM 1131 / KCTC 3163 / NCIMB 11718 / NCTC 13722 / AM63), this protein is Bifunctional protein GlmU.